Here is a 333-residue protein sequence, read N- to C-terminus: Fructose-1,6-bisphosphatase class 1 (333 aa).

4 residues coordinate Mg(2+): E89, D110, L112, and D113. Substrate contacts are provided by residues 113-116, N206, Y239, 257-259, and K269; these read DGSS and YLY. E275 lines the Mg(2+) pocket.

This sequence belongs to the FBPase class 1 family. In terms of assembly, homotetramer. Requires Mg(2+) as cofactor.

It is found in the cytoplasm. It carries out the reaction beta-D-fructose 1,6-bisphosphate + H2O = beta-D-fructose 6-phosphate + phosphate. The protein operates within carbohydrate biosynthesis; gluconeogenesis. In Sodalis glossinidius (strain morsitans), this protein is Fructose-1,6-bisphosphatase class 1.